The following is a 612-amino-acid chain: Cytoplasmic dynein 1 intermediate chain 2 (612 aa).

Basic and acidic residues-rich tracts occupy residues M1–R13 and Q20–A43. Positions M1 to Q188 are disordered. Position 2 is an N-acetylserine (S2). S51 is subject to Diphosphoserine. Residues S51 and S84 each carry the phosphoserine modification. The segment covering P82–S91 has biased composition (low complexity). Position 89 is a phosphothreonine (T89). Phosphoserine occurs at positions 91, 95, and 98. Residues E164–Q188 show a composition bias toward basic and acidic residues. WD repeat units lie at residues S251–E300, H304–V344, A353–D394, S403–S443, G448–S493, D496–T536, and E542–R581.

It belongs to the dynein intermediate chain family. As to quaternary structure, homodimer. The cytoplasmic dynein 1 complex consists of two catalytic heavy chains (HCs) and a number of non-catalytic subunits presented by intermediate chains (ICs), light intermediate chains (LICs) and light chains (LCs); the composition seems to vary in respect to the IC, LIC and LC composition. The heavy chain homodimer serves as a scaffold for the probable homodimeric assembly of the respective non-catalytic subunits. The ICs and LICs bind directly to the HC dimer and the LCs assemble on the IC dimer. Interacts with DYNLT3. Interacts with DYNLT1. Interacts (dephosphorylated at Ser-84) with DCTN1. Interacts with BICD2. Interacts with SPEF2. Interacts with CFAP61. In terms of processing, the phosphorylation status of Ser-84 appears to be involved in dynactin-dependent target binding. Pyrophosphorylation by 5-diphosphoinositol pentakisphosphate (5-IP7) promotes interaction with DCTN1. Serine pyrophosphorylation is achieved by Mg(2+)-dependent, but enzyme independent transfer of a beta-phosphate from a inositol pyrophosphate to a pre-phosphorylated serine residue.

It is found in the cytoplasm. The protein resides in the cytoskeleton. Its function is as follows. Acts as one of several non-catalytic accessory components of the cytoplasmic dynein 1 complex that are thought to be involved in linking dynein to cargos and to adapter proteins that regulate dynein function. Cytoplasmic dynein 1 acts as a motor for the intracellular retrograde motility of vesicles and organelles along microtubules. The intermediate chains mediate the binding of dynein to dynactin via its 150 kDa component (p150-glued) DCTN1. Involved in membrane-transport, such as Golgi apparatus, late endosomes and lysosomes. This chain is Cytoplasmic dynein 1 intermediate chain 2 (Dync1i2), found in Mus musculus (Mouse).